A 163-amino-acid chain; its full sequence is MSQKIGHSGLAFARLWHHVDVARDKRTLGRLASAIAITLIGRHKPVYHPSQDCGDYVVVTNCQKIRVTGKKFEQKTYWSHSGRPGQLKLQTMNKVVADKGFGEILKKAVSGMLPKNKLRKQRLDRLKVFDGSENPYKQNITAFAHEQSSIPEPLKESIFNQLK.

Residue S2 is modified to N-acetylserine. Residues 2-4 (SQK) constitute a propeptide that is removed on maturation.

The protein belongs to the universal ribosomal protein uL13 family. Component of the mitochondrial large ribosomal subunit (mt-LSU). Mature yeast 74S mitochondrial ribosomes consist of a small (37S) and a large (54S) subunit. The 37S small subunit contains a 15S ribosomal RNA (15S mt-rRNA) and 34 different proteins. The 54S large subunit contains a 21S rRNA (21S mt-rRNA) and 46 different proteins.

The protein resides in the mitochondrion. In terms of biological role, component of the mitochondrial ribosome (mitoribosome), a dedicated translation machinery responsible for the synthesis of mitochondrial genome-encoded proteins, including at least some of the essential transmembrane subunits of the mitochondrial respiratory chain. The mitoribosomes are attached to the mitochondrial inner membrane and translation products are cotranslationally integrated into the membrane. In Saccharomyces cerevisiae (strain ATCC 204508 / S288c) (Baker's yeast), this protein is Large ribosomal subunit protein uL13m (MRPL23).